Reading from the N-terminus, the 86-residue chain is Large ribosomal subunit protein bL27 (86 aa).

The disordered stretch occupies residues 1–26 (MATKKAGGSSRNGRDSAGRRLGVKKS).

The protein belongs to the bacterial ribosomal protein bL27 family.

The chain is Large ribosomal subunit protein bL27 from Rickettsia akari (strain Hartford).